Reading from the N-terminus, the 87-residue chain is Probable Fe(2+)-trafficking protein (87 aa).

Belongs to the Fe(2+)-trafficking protein family.

Functionally, could be a mediator in iron transactions between iron acquisition and iron-requiring processes, such as synthesis and/or repair of Fe-S clusters in biosynthetic enzymes. The polypeptide is Probable Fe(2+)-trafficking protein (Francisella tularensis subsp. mediasiatica (strain FSC147)).